The sequence spans 581 residues: DNA primase (581 aa).

A CHC2-type zinc finger spans residues 40-64 (CPFHNEKTPSFTVNGEKQFYHCFGC). The region spanning 259–341 (NRLLVVEGYM…GRQLRFMFLP (83 aa)) is the Toprim domain. Residues glutamate 265, aspartate 309, and aspartate 311 each coordinate Mg(2+).

This sequence belongs to the DnaG primase family. Monomer. Interacts with DnaB. Requires Zn(2+) as cofactor. Mg(2+) serves as cofactor.

The enzyme catalyses ssDNA + n NTP = ssDNA/pppN(pN)n-1 hybrid + (n-1) diphosphate.. Functionally, RNA polymerase that catalyzes the synthesis of short RNA molecules used as primers for DNA polymerase during DNA replication. The chain is DNA primase from Shigella flexneri.